A 208-amino-acid polypeptide reads, in one-letter code: MARYIGPKCKLSRREGTDLQLKSGVKPFDVKTKKANKAPGQHGQARGGKQSEYSLQLREKQKVRRIYGVLERQFSNYYKEAARVKGATGENLLKLLESRLDNVVYRMGFGSTRAEARQLVSHRSITLNGRRVNIASIQVKAGDVIAVHEGAKQQLRIKNAIELAAQRGIPAWIEVDHSKLEGTFKAAPDRSDLPAEINESLIVELYSK.

The segment at 24–52 (GVKPFDVKTKKANKAPGQHGQARGGKQSE) is disordered. Residues 98–160 (SRLDNVVYRM…AKQQLRIKNA (63 aa)) enclose the S4 RNA-binding domain.

Belongs to the universal ribosomal protein uS4 family. As to quaternary structure, part of the 30S ribosomal subunit. Contacts protein S5. The interaction surface between S4 and S5 is involved in control of translational fidelity.

In terms of biological role, one of the primary rRNA binding proteins, it binds directly to 16S rRNA where it nucleates assembly of the body of the 30S subunit. Functionally, with S5 and S12 plays an important role in translational accuracy. This chain is Small ribosomal subunit protein uS4, found in Acinetobacter baumannii (strain ATCC 17978 / DSM 105126 / CIP 53.77 / LMG 1025 / NCDC KC755 / 5377).